The chain runs to 98 residues: HssA/B-like protein 39 (98 aa).

Positions 1 to 21 (MTLFSSISSMSTSMSGSKSSI) are disordered.

Belongs to the hssA/B family.

This chain is HssA/B-like protein 39 (hssl39), found in Dictyostelium discoideum (Social amoeba).